Consider the following 164-residue polypeptide: MNPTNLSKYPNKLIVSKIRNGIVIDHIPAGKALKVLRVLGITGSEGLRVALVMNVESRKLGRKDIVKIEEKFLSMKELSLIALIAPTATINVIKEYKVVEKQRVEPPSIVKGLIKCPNPTCISRKKNEPIKSLFKLKSTNPIMLECQYCGYVLKGDEIEDYIES.

Positions 116, 121, 146, and 149 each coordinate Zn(2+).

This sequence belongs to the PyrI family. In terms of assembly, contains catalytic and regulatory chains. Zn(2+) is required as a cofactor.

Its function is as follows. Involved in allosteric regulation of aspartate carbamoyltransferase. In Staphylothermus marinus (strain ATCC 43588 / DSM 3639 / JCM 9404 / F1), this protein is Aspartate carbamoyltransferase regulatory chain.